The chain runs to 271 residues: PH domain-containing protein ECU06_0670 (271 aa).

Positions 26–145 (AKKTLDSSES…EKKNDAFIPP (120 aa)) are disordered. Composition is skewed to basic and acidic residues over residues 42 to 64 (EVGE…EPAM), 92 to 120 (QPEK…LLDK), and 128 to 140 (EENA…KKND). One can recognise a PH domain in the interval 166–267 (NTVVEGWMWK…WVEKLNETIR (102 aa)).

This Encephalitozoon cuniculi (strain GB-M1) (Microsporidian parasite) protein is PH domain-containing protein ECU06_0670.